Reading from the N-terminus, the 238-residue chain is Large ribosomal subunit protein uL1 (238 aa).

This sequence belongs to the universal ribosomal protein uL1 family. In terms of assembly, part of the 50S ribosomal subunit.

In terms of biological role, binds directly to 23S rRNA. The L1 stalk is quite mobile in the ribosome, and is involved in E site tRNA release. Functionally, protein L1 is also a translational repressor protein, it controls the translation of the L11 operon by binding to its mRNA. In Salinispora tropica (strain ATCC BAA-916 / DSM 44818 / JCM 13857 / NBRC 105044 / CNB-440), this protein is Large ribosomal subunit protein uL1.